A 276-amino-acid chain; its full sequence is MEDQPKDREAEVAGPWFSKWERQCLAEAEQAEQLSPELQEEAAADAAGLKIERQRLWHLFQISATAVAQLYKDSGCQQPGLSMWDPFQNAAMAVTSLYKESGDAYQRSFELGVQVGYQRRVRDVLEWVKKGRSIIRREDLISFLCGKVPPTPQPPRTPRMSPRPPAAASTQAAATESGTPVGVDLQPFHEAIALHGLSGAMASISMRSGPPGSSSQDGGIASSGRWKSSFLENDPNSLSSEELTLLLDSGGVRKRTSAQFGDGSADSPLHKRNRMV.

Disordered regions lie at residues 146–182 (GKVP…TPVG), 204–238 (ISMR…PNSL), and 252–276 (VRKR…NRMV). Positions 149–165 (PPTPQPPRTPRMSPRPP) are enriched in pro residues. 2 stretches are compositionally biased toward low complexity: residues 166-179 (AAAS…ESGT) and 208-219 (SGPPGSSSQDGG). Residues 252 to 276 (VRKRTSAQFGDGSADSPLHKRNRMV) are nuclear localization signal.

It belongs to the HAPSTR1 family. Homooligomer. Heterooligomer with HAPSTR1; the interaction is direct and stabilizes HAPSTR1 independently of HUWE1. Interacts with HUWE1.

The protein resides in the nucleus. Together with HAPSTR1 plays a central regulatory role in the cellular response to molecular stressors, such as DNA damage, nutrient scarcity, and protein misfolding. Regulates these multiple stress response signaling pathways by stabilizing HAPSTR1, but also independently of HAPSTR1. This is HUWE1-associated protein modifying stress responses 2 from Mus musculus (Mouse).